The primary structure comprises 266 residues: Blue copper protein (266 aa).

The N-terminal stretch at 1–24 (MAYSKILFCFMIGFVGFLPAITMA) is a signal peptide. 3 consecutive Phytocyanin domains span residues 25 to 56 (TQYLVGDDRGWTLDFDYQTWAKNKTFKVGDTL), 57 to 102 (APPP…TVED), and 116 to 216 (TEYW…TVEG). Residue Asn47 is glycosylated (N-linked (GlcNAc...) asparagine). His156 is a binding site for Cu cation. An N-linked (GlcNAc...) asparagine glycan is attached at Asn162. A disulfide bond links Cys169 and Cys203. Cu cation-binding residues include Cys197, His202, and Gln208. The helical transmembrane segment at 245-265 (ITSPYKMFVGGAVSIWTILTL) threads the bilayer.

Its subcellular location is the membrane. This is Blue copper protein from Petunia hybrida (Petunia).